The following is a 378-amino-acid chain: Probable endopolygalacturonase E (378 aa).

An N-terminal signal peptide occupies residues 1 to 19 (MVTSSSVIVLTLWAALVSA). The propeptide occupies 20 to 38 (SPVADPLVTPAPKLEDLEK). A disulfide bridge connects residues cysteine 43 and cysteine 61. PbH1 repeat units lie at residues 103–125 (GPLVSVSGTDITVTGADGAYLNG), 174–204 (STYLTMEDITIDNTDGDDGEAANTDGFDIGD), and 205–226 (STYITITGANVYNQDDCVAVNS). The active-site Proton donor is aspartate 219. Cysteine 221 and cysteine 237 form a disulfide bridge. Histidine 241 is an active-site residue. PbH1 repeat units lie at residues 256–277 (VKNVTFYDSEIKSSQNGVRIKT), 285–307 (VSEVTYKEITLSDITDYGIVVEQ), and 317–345 (TDGITIEDFVLDNVQGSVESSGTNIYIVC). A glycan (N-linked (GlcNAc...) asparagine) is linked at asparagine 258. 2 disulfide bridges follow: cysteine 345-cysteine 350 and cysteine 369-cysteine 378.

The protein belongs to the glycosyl hydrolase 28 family.

The protein resides in the secreted. It carries out the reaction (1,4-alpha-D-galacturonosyl)n+m + H2O = (1,4-alpha-D-galacturonosyl)n + (1,4-alpha-D-galacturonosyl)m.. In terms of biological role, involved in maceration and soft-rotting of plant tissue. Hydrolyzes the 1,4-alpha glycosidic bonds of de-esterified pectate in the smooth region of the plant cell wall. The protein is Probable endopolygalacturonase E (pgaE) of Aspergillus niger (strain ATCC MYA-4892 / CBS 513.88 / FGSC A1513).